Here is a 90-residue protein sequence, read N- to C-terminus: Carboxysome shell vertex protein CsoS4A (90 aa).

The region spanning 1–78 is the BMV domain; sequence MKIYKVDKTL…SDLTIVGIID (78 aa).

Belongs to the CcmL/EutN family. CsoS4 subfamily. As to quaternary structure, homopentamer.

It localises to the carboxysome. Probably forms vertices in the carboxysome, a polyhedral inclusion where RuBisCO (ribulose bisphosphate carboxylase, cbbL-cbbS) is sequestered. Has been modeled to induce curvature upon insertion into an otherwise flat hexagonal layer of major carboxysome subunits. The chain is Carboxysome shell vertex protein CsoS4A from Hydrogenovibrio crunogenus (strain DSM 25203 / XCL-2) (Thiomicrospira crunogena).